Consider the following 439-residue polypeptide: Xaa-Pro dipeptidase (439 aa).

Mn(2+)-binding residues include D244, D255, H335, E380, and E419.

This sequence belongs to the peptidase M24B family. Bacterial-type prolidase subfamily. Mn(2+) is required as a cofactor.

The catalysed reaction is Xaa-L-Pro dipeptide + H2O = an L-alpha-amino acid + L-proline. Functionally, splits dipeptides with a prolyl residue in the C-terminal position. The polypeptide is Xaa-Pro dipeptidase (Shewanella sp. (strain MR-7)).